We begin with the raw amino-acid sequence, 379 residues long: Succinyl-diaminopimelate desuccinylase (379 aa).

A Zn(2+)-binding site is contributed by His70. The active site involves Asp72. Asp103 contacts Zn(2+). Glu137 acts as the Proton acceptor in catalysis. Residues Glu138, Glu166, and His352 each contribute to the Zn(2+) site.

The protein belongs to the peptidase M20A family. DapE subfamily. Homodimer. Zn(2+) serves as cofactor. The cofactor is Co(2+).

The catalysed reaction is N-succinyl-(2S,6S)-2,6-diaminopimelate + H2O = (2S,6S)-2,6-diaminopimelate + succinate. It participates in amino-acid biosynthesis; L-lysine biosynthesis via DAP pathway; LL-2,6-diaminopimelate from (S)-tetrahydrodipicolinate (succinylase route): step 3/3. In terms of biological role, catalyzes the hydrolysis of N-succinyl-L,L-diaminopimelic acid (SDAP), forming succinate and LL-2,6-diaminopimelate (DAP), an intermediate involved in the bacterial biosynthesis of lysine and meso-diaminopimelic acid, an essential component of bacterial cell walls. The polypeptide is Succinyl-diaminopimelate desuccinylase (Burkholderia cenocepacia (strain ATCC BAA-245 / DSM 16553 / LMG 16656 / NCTC 13227 / J2315 / CF5610) (Burkholderia cepacia (strain J2315))).